Here is a 225-residue protein sequence, read N- to C-terminus: UPF0758 protein BP1235 (225 aa).

The region spanning 103 to 225 (ALANPDLVRR…TVSMAAQGHL (123 aa)) is the MPN domain. Positions 174, 176, and 187 each coordinate Zn(2+). The short motif at 174-187 (HNHPGGTAAASAAD) is the JAMM motif element.

This sequence belongs to the UPF0758 family.

This chain is UPF0758 protein BP1235, found in Bordetella pertussis (strain Tohama I / ATCC BAA-589 / NCTC 13251).